Consider the following 505-residue polypeptide: Aspartyl/glutamyl-tRNA(Asn/Gln) amidotransferase subunit B (505 aa).

This sequence belongs to the GatB/GatE family. GatB subfamily. As to quaternary structure, heterotrimer of A, B and C subunits.

The catalysed reaction is L-glutamyl-tRNA(Gln) + L-glutamine + ATP + H2O = L-glutaminyl-tRNA(Gln) + L-glutamate + ADP + phosphate + H(+). It catalyses the reaction L-aspartyl-tRNA(Asn) + L-glutamine + ATP + H2O = L-asparaginyl-tRNA(Asn) + L-glutamate + ADP + phosphate + 2 H(+). Allows the formation of correctly charged Asn-tRNA(Asn) or Gln-tRNA(Gln) through the transamidation of misacylated Asp-tRNA(Asn) or Glu-tRNA(Gln) in organisms which lack either or both of asparaginyl-tRNA or glutaminyl-tRNA synthetases. The reaction takes place in the presence of glutamine and ATP through an activated phospho-Asp-tRNA(Asn) or phospho-Glu-tRNA(Gln). This chain is Aspartyl/glutamyl-tRNA(Asn/Gln) amidotransferase subunit B, found in Haloarcula marismortui (strain ATCC 43049 / DSM 3752 / JCM 8966 / VKM B-1809) (Halobacterium marismortui).